The chain runs to 780 residues: Cullin-5 (780 aa).

A Phosphoserine modification is found at serine 34. Threonine 210 bears the Phosphothreonine mark. The Cullin neddylation domain maps to 711 to 772 (RILRTQEAII…HKYIRRDEAD (62 aa)). Lysine 724 is covalently cross-linked (Glycyl lysine isopeptide (Lys-Gly) (interchain with G-Cter in NEDD8)).

The protein belongs to the cullin family. Component of multiple cullin-5-RING E3 ubiquitin-protein ligase complexes (ECS complexes, also named CRL5 complexes) formed of CUL5, Elongin BC (ELOB and ELOC), RNF7/RBX2 and a variable SOCS box domain-containing protein as substrate-specific recognition component. CUL5-containing ECS complexes specifically contain RNF7/RBX2, and not RBX1, as catalytic subunit. Component of the ECS(ASB2) complex with the substrate recognition component ASB2. Component of the ECS(ASB6) complex with the substrate recognition component ASB6. Component of the ECS(ASB7) complex with the substrate recognition component ASB7. Component of the ECS(ASB9) complex with the substrate recognition component ASB9. Component of the ECS(ASB11) complex with the substrate recognition component ASB11. Component of the ECS(ASB12) complex with the substrate recognition component ASB12. Component of the ECS(LRRC41) complex with the substrate recognition component LRRC41. Component of the ECS(SOCS1) complex with the substrate recognition component SOCS1. Component of the ECS(SOCS2) complex with the substrate recognition component SOCS2. Component of the ECS(WSB1) complex with the substrate recognition subunit WSB1. Component of the ECS(SOCS3) complex with the substrate recognition component SOCS3. Component of the ECS(SOCS7) complex with the substrate recognition component SOCS7. Component of the ECS(SPSB1) complex with the substrate recognition component SPSB1. Component of the ECS(SPSB3) complex with the substrate recognition component SPSB3. Component of the ECS(SPSB2) complex with the substrate recognition component SPSB2. Component of the ECS(SPSB4) complex with the substrate recognition component SPSB4. Component of the ECS(RAB40) complex with the substrate recognition subunit RAB40A, RAB40B or RAB40C. Component of the ECS(KLHDC1) complex with the substrate recognition component KLHDC1. Component of the ECS(PCMTD1) complex with the substrate recognition subunit PCMTD1. May also form complexes containing RBX1 and ELOA or VHL; additional evidence is however required to confirm this result in vivo. Interacts (when neddylated) with ARIH2; leading to activate the E3 ligase activity of ARIH2. Interacts with ERCC6; the interaction is induced by DNA damaging agents or inhibitors of RNA polymerase II elongation. Interacts with ELOA (via the BC-box). Interacts (unneddylated form) with DCUN1D1, DCUN1D2, DCUN1D3, DCUN1D4 and DCUN1D5; these interactions promote the cullin neddylation. Post-translationally, neddylated; which enhances the ubiquitination activity of ECS complexes and prevents binding of the inhibitor CAND1. Deneddylated via its interaction with the COP9 signalosome (CSN).

It localises to the nucleus. Its pathway is protein modification; protein ubiquitination. Core component of multiple cullin-5-RING E3 ubiquitin-protein ligase complexes (ECS complexes, also named CRL5 complexes), which mediate the ubiquitination and subsequent proteasomal degradation of target proteins. Acts a scaffold protein that contributes to catalysis through positioning of the substrate and the ubiquitin-conjugating enzyme. The functional specificity of the E3 ubiquitin-protein ligase complex depends on the variable SOCS box-containing substrate recognition component. Acts as a key regulator of neuron positioning during cortex development: component of various SOCS-containing ECS complexes, such as the ECS(SOCS7) complex, that regulate reelin signaling by mediating ubiquitination and degradation of DAB1. ECS(SOCS1) seems to direct ubiquitination of JAK2. The ECS(SOCS2) complex mediates the ubiquitination and subsequent proteasomal degradation of phosphorylated EPOR and GHR. The ECS(SPSB3) complex catalyzes ubiquitination of nuclear CGAS. ECS(KLHDC1) complex is part of the DesCEND (destruction via C-end degrons) pathway and mediates ubiquitination and degradation of truncated SELENOS selenoprotein produced by failed UGA/Sec decoding, which ends with a glycine. The ECS(ASB9) complex mediates ubiquitination and degradation of CKB. As part of some ECS complex, promotes 'Lys-11'-linked ubiquitination and degradation of BTRC. As part of a multisubunit ECS complex, polyubiquitinates monoubiquitinated POLR2A. As part of the ECS(RAB40C) complex, mediates ANKRD28 ubiquitination and degradation, thereby regulating protein phosphatase 6 (PP6) complex activity and focal adhesion assembly during cell migration. As part of the ECS(RAB40A) complex, mediates RHOU 'Lys-48'-linked ubiquitination and degradation, thus inhibiting focal adhesion disassembly during cell migration. As part of the ECS(RAB40B) complex, mediates LIMA1/EPLIN and RAP2 ubiquitination, thereby regulating actin cytoskeleton dynamics and stress fiber formation during cell migration. May form a cell surface vasopressin receptor. The protein is Cullin-5 of Rattus norvegicus (Rat).